Here is a 1099-residue protein sequence, read N- to C-terminus: Solute carrier family 12 member 1 (1099 aa).

Residues 1 to 177 (MSLNNSSNVF…EDDQAGVVKF (177 aa)) lie on the Cytoplasmic side of the membrane. Residues 20–23 (RFQV) carry the RFXV motif motif. The tract at residues 31–53 (ESSAAADDNTDPPHYEETSFGDE) is disordered. At S61 the chain carries Phosphoserine. Residue S91 is modified to Phosphoserine; by OXSR1 and STK39. T95 carries the phosphothreonine modification. 2 positions are modified to phosphothreonine; by OXSR1 and STK39: T100 and T105. T118 is subject to Phosphothreonine. S120 carries the post-translational modification Phosphoserine. At S130 the chain carries Phosphoserine; by AMPK. A Phosphoserine modification is found at S148. Residues 178–198 (GWVKGVLVRCMLNIWGVMLFI) form a helical membrane-spanning segment. Over 199–201 (RLS) the chain is Extracellular. Residues 202-222 (WIVGEAGIGLGVLIILLSTMV) traverse the membrane as a helical segment. Topologically, residues 223–259 (TSITGLSTSAIATNGFVRGGGAYYLISRSLGPEFGGS) are cytoplasmic. The helical transmembrane segment at 260–280 (IGLIFAFANAVAVAMYVVGFA) threads the bilayer. Residues 281 to 302 (ETVVDLLKESDSMMVDPTNDIR) are Extracellular-facing. Residues 303–323 (IIGSITVVILLGISVAGMEWE) form a helical membrane-spanning segment. At 324–327 (AKAQ) the chain is on the cytoplasmic side. Residues 328 to 348 (VILLVILLIAIANFFIGTVIP) form a helical membrane-spanning segment. The Extracellular portion of the chain corresponds to 349–379 (SNNEKKSRGFFNYQASIFAENFGPRFTKGEG). The helical transmembrane segment at 380–400 (FFSVFAIFFPAATGILAGANI) threads the bilayer. Residues 401-417 (SGDLEDPQDAIPRGTML) are Cytoplasmic-facing. A helical membrane pass occupies residues 418 to 438 (AIFITTVAYLGVAICVGACVV). Topologically, residues 439 to 550 (RDATGNMNDT…NNEPLRGYIL (112 aa)) are extracellular. N-linked (GlcNAc...) asparagine glycosylation is found at N446 and N456. The next 2 membrane-spanning stretches (helical) occupy residues 551 to 571 (TFLIAMAFILIAELNTIAPII) and 572 to 592 (SNFFLASYALINFSCFHASYA). Residues 593-609 (KSPGWRPAYGIYNMWVS) are Extracellular-facing. A helical transmembrane segment spans residues 610-630 (LFGAVLCCAVMFVINWWAAVI). Topologically, residues 631 to 1099 (TYVIEFFLYV…NHKNVLTFYS (469 aa)) are cytoplasmic.

The protein belongs to the SLC12A transporter family. In terms of assembly, when phosphorylated, interacts with PPP3CB. Post-translationally, phosphorylated at Ser-91, Thr-100 and Thr-105 by OXSR1/OSR1 and STK39/SPAK downstream of WNK kinases (WNK1, WNK2, WNK3 or WNK4), promoting its activity. In terms of tissue distribution, kidney; localizes to the thick ascending limbs (at protein level).

The protein localises to the apical cell membrane. The enzyme catalyses K(+)(out) + 2 chloride(out) + Na(+)(out) = K(+)(in) + 2 chloride(in) + Na(+)(in). Activated following phosphorylation by OXSR1/OSR1 and STK39/SPAK downstream of WNK kinases (WNK1, WNK2, WNK3 or WNK4). Functionally, renal sodium, potassium and chloride ion cotransporter that mediates the transepithelial NaCl reabsorption in the thick ascending limb and plays an essential role in the urinary concentration and volume regulation. Electrically silent transporter system. The sequence is that of Solute carrier family 12 member 1 (SLC12A1) from Homo sapiens (Human).